Consider the following 146-residue polypeptide: Leghemoglobin 1 (146 aa).

One can recognise a Globin domain in the interval 2–146; it reads GFTAQQDALV…LAAAIKKAMS (145 aa). A phosphoserine; by CCAMK mark is found at Ser13 and Ser14. The residue at position 30 (Tyr30) is a Nitrated tyrosine. Phosphoserine; by CCAMK occurs at positions 45 and 55. Ser45 lines the heme b pocket. An O2-binding site is contributed by His61. Residues Lys64, His93, and Lys96 each contribute to the heme b site. At Ser123 the chain carries Phosphoserine; by CCAMK. Tyr134 carries the post-translational modification Nitrated tyrosine.

The protein belongs to the plant globin family. In terms of assembly, monomer. Nitrated in effective nodules and particularly in hypoxic conditions; this mechanism may play a protective role in the symbiosis by buffering toxic peroxynitrite NO(2)(-). Nitration level decrease during nodule senescence. In terms of processing, phosphorylated by CCAMK at serine residues in a Ca(2+)-dependent manner; the phosphorylation at Ser-45 disrupts the molecular environment of its porphyrin ring oxygen binding pocket, thus leading to a reduced oxygen consumption and to the delivery of oxygen O(2) to symbiosomes. As to expression, specifically and strongly expressed in root nodules and at low levels in seedlings.

The protein resides in the cytoplasm. It is found in the cytosol. It localises to the nucleus. Functionally, leghemoglobin that reversibly binds oxygen O(2) through a pentacoordinated heme iron. In root nodules, facilitates the diffusion of oxygen to the bacteroids while preventing the bacterial nitrogenase from being inactivated by buffering dioxygen, nitric oxide and carbon monoxide, and promoting the formation of reactive oxygen species (ROS, e.g. H(2)O(2)). This role is essential for symbiotic nitrogen fixation (SNF). This is Leghemoglobin 1 from Lotus japonicus (Lotus corniculatus var. japonicus).